The primary structure comprises 489 residues: IPT/TIG domain-containing protein BACOVA_02650 (489 aa).

The N-terminal stretch at 1 to 27 (MKSIYKYLDTRLFLIGLLVLPFLAVVS) is a signal peptide. C28 carries N-palmitoyl cysteine lipidation. Residue C28 is the site of S-diacylglycerol cysteine attachment. IPT/TIG domains are found at residues 57-103 (VNPG…PNEL), 136-204 (PYIT…TAPA), and 232-304 (PVVT…AIGG).

It localises to the cell outer membrane. It participates in glucan metabolism; xyloglucan degradation. Functionally, polysaccharide-binding protein present at the surface of the cell. Probably mediates xyloglucan-binding before xyloglucan transport in the periplasm for degradation. The protein is IPT/TIG domain-containing protein BACOVA_02650 of Bacteroides ovatus (strain ATCC 8483 / DSM 1896 / JCM 5824 / BCRC 10623 / CCUG 4943 / NCTC 11153).